Here is a 439-residue protein sequence, read N- to C-terminus: Ribosomal protein uS12 methylthiotransferase RimO (439 aa).

Positions 3–118 constitute an MTTase N-terminal domain; it reads KKFYITTLGC…AGKILREKFP (116 aa). [4Fe-4S] cluster contacts are provided by cysteine 12, cysteine 48, cysteine 81, cysteine 157, cysteine 161, and cysteine 164. A Radical SAM core domain is found at 143 to 370; that stretch reads NYSKPYAYVK…RDVHLAILEE (228 aa). The TRAM domain occupies 373–438; sequence ESRIGQTYDA…EYDMNGTWIS (66 aa).

It belongs to the methylthiotransferase family. RimO subfamily. The cofactor is [4Fe-4S] cluster.

The protein localises to the cytoplasm. It catalyses the reaction L-aspartate(89)-[ribosomal protein uS12]-hydrogen + (sulfur carrier)-SH + AH2 + 2 S-adenosyl-L-methionine = 3-methylsulfanyl-L-aspartate(89)-[ribosomal protein uS12]-hydrogen + (sulfur carrier)-H + 5'-deoxyadenosine + L-methionine + A + S-adenosyl-L-homocysteine + 2 H(+). Catalyzes the methylthiolation of an aspartic acid residue of ribosomal protein uS12. In Leptospira borgpetersenii serovar Hardjo-bovis (strain JB197), this protein is Ribosomal protein uS12 methylthiotransferase RimO.